The chain runs to 85 residues: Sodium channel neurotoxin MeuNaTxalpha-1 (85 aa).

Residues 1–19 (MNSLVMISLALLVMTGVES) form the signal peptide. In terms of domain architecture, LCN-type CS-alpha/beta spans 21-83 (RDGYIADDKN…VPIKVSGKCN (63 aa)). The segment at 27–31 (DDKNC) is specificity module, loop 1. Disulfide bonds link Cys31–Cys82, Cys35–Cys55, Cys41–Cys65, and Cys45–Cys67. 2 specificity module, loop regions span residues 58–62 (AGQYG) and 75–83 (PIKVSGKCN). An Asparagine amide modification is found at Asn83.

It belongs to the long (4 C-C) scorpion toxin superfamily. Sodium channel inhibitor family. Alpha subfamily. In terms of processing, C-terminal amidation does not appear to play an important role in activity, since the non-amidated recombinant toxin and the native toxin (which is amidated) show similar activities on all sodium channels tested. As to expression, expressed by the venom gland.

Its subcellular location is the secreted. Functionally, alpha toxins bind voltage-independently at site-3 of sodium channels (Nav) and inhibit the inactivation of the activated channels, thereby blocking neuronal transmission. This toxin inhibits inactivation of Nav1.6/SCN8A (EC(50)=3.1 uM) and drosophila DmNav1 (EC(50)=1.17 uM). It also shows a weak inhibition of inactivation on Nav1.2/SCN2A Nav1.3/SCN3A, and Nav1.7/SCN9A. The toxin (1 uM) does not significantly shift the midpoint of activation at the two channels, but induces a significant depolarizing shift in the V(1/2) of inactivation of the channels. The toxin has also been shown to dose-dependently stimulates intracellular signaling in DRG neurons through activation of two kinases (type II protein kinase A (PKA-II) and MAP kinases 1/3 (MAPK1/MAPK3)). Nav1.2/SCN2A is strongly suggested to be the target channel predominantly involved in this activation. In vivo, the toxin induces a dose-dependent thermal hyperalgesia lasting 30-45 minutes. This chain is Sodium channel neurotoxin MeuNaTxalpha-1, found in Mesobuthus eupeus (Lesser Asian scorpion).